Here is a 465-residue protein sequence, read N- to C-terminus: MIPVRGLEGRKVAVLGLGRSGLATARALEAGGAEPLLWDDSPEARAKAEGQGFTVTDLTRERAFEGVALLVTSPGIPHLYPAPNPVIARAMAAGVPVDNDIGLFFRSFATRDWDAFDQMPRVVCVTGSNGKSTTTALIHHILSEAGRPTQMAGNIGRGVLDLDPARDGEVVVLELSSYQTDLARALTPDVAVFTNLSPDHLDRHGGMGGYFAAKRRLFAEGGPDRAVIGVDEPEGLYLAGQLSVAPEDDRVIRISAGQKLERFGWSVFARKGFLAEWRKGRQMASIDLRAMPGLPGAHNHQNACAAYAACRTMGLAPRQIEAALASFAGLPHRSQTVGEKGGVRFVNDSKATNVDSAAKALQAFPKIRWIAGGLGKDGGIVALQPHLGSVVKAYLIGHSARDFALQIGATDHEICETMERAVARAAEEAQPGEVVLLAPAAASFDQYPNFEKRGEDFMEKVKALL.

An ATP-binding site is contributed by 127–133; the sequence is GSNGKST.

The protein belongs to the MurCDEF family.

It localises to the cytoplasm. It carries out the reaction UDP-N-acetyl-alpha-D-muramoyl-L-alanine + D-glutamate + ATP = UDP-N-acetyl-alpha-D-muramoyl-L-alanyl-D-glutamate + ADP + phosphate + H(+). The protein operates within cell wall biogenesis; peptidoglycan biosynthesis. Cell wall formation. Catalyzes the addition of glutamate to the nucleotide precursor UDP-N-acetylmuramoyl-L-alanine (UMA). This chain is UDP-N-acetylmuramoylalanine--D-glutamate ligase, found in Cereibacter sphaeroides (strain ATCC 17023 / DSM 158 / JCM 6121 / CCUG 31486 / LMG 2827 / NBRC 12203 / NCIMB 8253 / ATH 2.4.1.) (Rhodobacter sphaeroides).